The sequence spans 178 residues: Endothelin-2 (178 aa).

Residues 1–24 form the signal peptide; sequence MVSVPTAWCSVALALLVALHEGKD. A propeptide spanning residues 25–46 is cleaved from the precursor; that stretch reads QAAATLEQPASSPRARAAHLRL. Intrachain disulfides connect cysteine 49/cysteine 63 and cysteine 51/cysteine 59. Positions 70 to 178 are excised as a propeptide; sequence VNTPGQTAPY…RTTHSRHRKR (109 aa). The segment at 96–111 is endothelin-like; sequence CECSSARDPACATFCH. The disordered stretch occupies residues 154-178; the sequence is KTHFAKRQQEATREPRTTHSRHRKR. Positions 160 to 170 are enriched in basic and acidic residues; it reads RQQEATREPRT.

It belongs to the endothelin/sarafotoxin family.

It is found in the secreted. Functionally, endothelins are endothelium-derived vasoconstrictor peptides. The protein is Endothelin-2 (EDN2) of Oryctolagus cuniculus (Rabbit).